A 1249-amino-acid polypeptide reads, in one-letter code: Protein lingerer (1249 aa).

Positions 1 to 66 (MSTQTRSGGG…VVKAKQPTAE (66 aa)) are disordered. Gly residues-rich tracts occupy residues 7–30 (SGGG…GAAG) and 38–50 (GSTG…GAGG). The UBA domain occupies 84–124 (KIQEKIQSLMETTQRSEEEVCCALQECDSDLDRAVIFLLET). 10 disordered regions span residues 132–312 (TTSK…LKPE), 350–375 (SAGA…ASNV), 454–506 (MPPM…PPTT), 549–579 (YAAA…AVEM), 616–717 (TTGT…TSVS), 738–922 (PYGQ…SLPI), 1016–1042 (GRFT…TGSG), 1124–1149 (QQQS…APSM), 1164–1186 (KQSF…AGTT), and 1211–1249 (QNMH…TGPN). The span at 186–209 (NRGGSGNQRSGGPGRGGRAGGYRD) shows a compositional bias: gly residues. Residues 210-227 (GGGDRDRDRDRNGYDKGG) are compositionally biased toward basic and acidic residues. Composition is skewed to gly residues over residues 228–240 (EGGG…GGDG) and 248–269 (DGPG…GGPR). Positions 350 to 369 (SAGAGAQQQQSQQSTQTGVP) are enriched in low complexity. Residues 457-494 (MNTSSSLSAEQSQYFSTLSSQNSNLQPTPSAVGFQQQP) are compositionally biased toward polar residues. Composition is skewed to low complexity over residues 549–559 (YAAAATQQPPV), 616–639 (TTGT…PATV), and 647–664 (QSQL…APQQ). Residues 678-705 (ASSQIMPGQGTTEALSSQNDGLANSYSR) show a composition bias toward polar residues. Residues 706–717 (TNASGSVSTSVS) show a composition bias toward low complexity. Composition is skewed to polar residues over residues 738–769 (PYGQ…TASY) and 777–809 (GYNN…NVNA). The span at 811–861 (QPPSSSVTNNVVPNNNTGNSVGGVSNQSNLPVNNNAVNSSSNNNAGGYLSS) shows a compositional bias: low complexity. Residues 862–873 (QYPVSQTSSAFP) are compositionally biased toward polar residues. 3 stretches are compositionally biased toward low complexity: residues 874–884 (SQQNYQNSSQN), 892–922 (NSNT…SLPI), and 1023–1034 (NNSSPVSNVPSS). Residues 1124–1138 (QQQSKGQTVANQQSG) are compositionally biased toward polar residues. Residues 1216–1249 (DSNSSGQRPQNNNQGKTASKQQGYSASTYWTGPN) are compositionally biased toward polar residues.

It is found in the cytoplasm. In terms of biological role, acts in the nervous system to mediate the control of copulatory organs during courtship. In Anopheles gambiae (African malaria mosquito), this protein is Protein lingerer.